Here is a 483-residue protein sequence, read N- to C-terminus: Protein disulfide-isomerase 5-3 (483 aa).

N-linked (GlcNAc...) asparagine glycans are attached at residues N53, N74, and N99. Residues 133–263 (EETKEEFPDG…IVKMVEGLVA (131 aa)) form the Thioredoxin domain. Catalysis depends on C170, which acts as the Nucleophile. N279, N326, and N376 each carry an N-linked (GlcNAc...) asparagine glycan. Residues 442 to 462 (FSHFITNLCAIIGGVFTVAGI) form a helical membrane-spanning segment.

The protein belongs to the protein disulfide isomerase family. In terms of tissue distribution, widely expressed.

The protein localises to the membrane. Acts as a protein-folding catalyst that interacts with nascent polypeptides to catalyze the formation, isomerization, and reduction or oxidation of disulfide bonds. This chain is Protein disulfide-isomerase 5-3 (PDIL5-3), found in Arabidopsis thaliana (Mouse-ear cress).